The following is a 562-amino-acid chain: Pyruvate kinase isozyme G, chloroplastic (562 aa).

Arg-121 contacts substrate. Residues Asn-123, Ser-125, Asp-156, and Thr-157 each contribute to the K(+) site. Residue 123–126 coordinates ATP; sequence NMSH. Residue Glu-308 participates in Mg(2+) binding. Substrate-binding residues include Gly-331, Asp-332, and Thr-364. Asp-332 lines the Mg(2+) pocket.

Belongs to the pyruvate kinase family. In terms of assembly, homotetramer. The cofactor is Mg(2+). K(+) is required as a cofactor. As to expression, highest levels in leaves. Also found in stems, roots and flowers.

Its subcellular location is the plastid. The protein resides in the chloroplast. It catalyses the reaction pyruvate + ATP = phosphoenolpyruvate + ADP + H(+). It functions in the pathway carbohydrate degradation; glycolysis; pyruvate from D-glyceraldehyde 3-phosphate: step 5/5. The chain is Pyruvate kinase isozyme G, chloroplastic from Nicotiana tabacum (Common tobacco).